The sequence spans 501 residues: Ell-associated factor Eaf (501 aa).

2 stretches are compositionally biased toward polar residues: residues 138–149 (NMGQGQLHSQGA) and 173–192 (ENSTMRISTKTKVSTGSRRN). Disordered stretches follow at residues 138 to 226 (NMGQ…PAWD) and 256 to 501 (GHAN…DDDD). 2 stretches are compositionally biased toward low complexity: residues 200–221 (RNSPMQQSSPSRPVPVHRSPQS) and 256–270 (GHANTSGSSTGSATG). S202 bears the Phosphoserine mark. Over residues 271 to 283 (QTDFGSISSSSHI) the composition is skewed to polar residues. Composition is skewed to low complexity over residues 302 to 314 (QRQSPPMAQQQQP) and 329 to 343 (QQQRQRNSPQQQRPP). The span at 393 to 408 (DSSDSDSGSDSDDSTE) shows a compositional bias: acidic residues. Low complexity-rich tracts occupy residues 416–437 (QQPVYQNQNHQQQQMAQQHLNQ), 455–471 (QQQQQQMVPHQQQQKQQ), and 483–501 (NDLLQNDLQLSSNSSDDDD).

Belongs to the EAF family.

The protein localises to the nucleus. Functionally, promotes transcriptional elongation by Su(Tpl)/ELL. Essential for development. The chain is Ell-associated factor Eaf from Drosophila yakuba (Fruit fly).